Here is a 377-residue protein sequence, read N- to C-terminus: Beta-lactamase (377 aa).

The signal sequence occupies residues 1–19; the sequence is MFKTTLCALLITASCSTFA. The active-site Acyl-ester intermediate is the Ser80. The a beta-lactam site is built by Ser80, Gln136, Tyr166, Asn168, Ala334, and Asn359.

Belongs to the class-C beta-lactamase family. In terms of assembly, monomer.

The protein resides in the periplasm. The enzyme catalyses a beta-lactam + H2O = a substituted beta-amino acid. Its activity is regulated as follows. Inhibited by the beta-lactamase-blocking agents avibactam, enmetazobactam, relebactam, nacubactam, vaborbactam, taniborbactam, zidebactam, and beta-lactam-analog boronic acids, via a covalent binding to Ser-80. Inhibited by non-beta-lactam, benzo(b)thiophene-2-boronic acid (BZBTH2B) and various cyclic boronates. Not inhibited by clavulanic acid. Inhibited by O-aryloxycarbonyl hydroxamates, via cross-linking of the active site Ser-80 to Lys-331. Weakly inhibited by citric acid. Functionally, class C beta-lactamase which confers resistance to penicillins and cephalosporins. Has benzylpenicillin- and cephaloridine-hydrolyzing activity. Has weak cefuroxime, cefotaxime, cefoxitin and oxacillin-hydrolyzing activities. The sequence is that of Beta-lactamase from Escherichia coli (strain K12).